The sequence spans 97 residues: Small ribosomal subunit protein eS25 (97 aa).

Residues 1-24 form a disordered region; sequence MAPAASGAKKQKKKWSKGKVKDKA. A compositionally biased stretch (basic residues) spans 9 to 18; the sequence is KKQKKKWSKG.

It belongs to the eukaryotic ribosomal protein eS25 family. In terms of assembly, component of the small ribosomal subunit (SSU). Mature N.crassa ribosomes consist of a small (40S) and a large (60S) subunit. The 40S small subunit contains 1 molecule of ribosomal RNA (18S rRNA) and at least 32 different proteins. The large 60S subunit contains 3 rRNA molecules (26S, 5.8S and 5S rRNA) and at least 42 different proteins.

It is found in the cytoplasm. Functionally, component of the ribosome, a large ribonucleoprotein complex responsible for the synthesis of proteins in the cell. The small ribosomal subunit (SSU) binds messenger RNAs (mRNAs) and translates the encoded message by selecting cognate aminoacyl-transfer RNA (tRNA) molecules. The large subunit (LSU) contains the ribosomal catalytic site termed the peptidyl transferase center (PTC), which catalyzes the formation of peptide bonds, thereby polymerizing the amino acids delivered by tRNAs into a polypeptide chain. The nascent polypeptides leave the ribosome through a tunnel in the LSU and interact with protein factors that function in enzymatic processing, targeting, and the membrane insertion of nascent chains at the exit of the ribosomal tunnel. The polypeptide is Small ribosomal subunit protein eS25 (rps-25) (Neurospora crassa (strain ATCC 24698 / 74-OR23-1A / CBS 708.71 / DSM 1257 / FGSC 987)).